The chain runs to 387 residues: Mannitol-1-phosphate 5-dehydrogenase (387 aa).

3–14 is an NAD(+) binding site; that stretch reads AVHFGAGNIGRG.

The protein belongs to the mannitol dehydrogenase family.

The enzyme catalyses D-mannitol 1-phosphate + NAD(+) = beta-D-fructose 6-phosphate + NADH + H(+). This chain is Mannitol-1-phosphate 5-dehydrogenase, found in Pseudarthrobacter chlorophenolicus (strain ATCC 700700 / DSM 12829 / CIP 107037 / JCM 12360 / KCTC 9906 / NCIMB 13794 / A6) (Arthrobacter chlorophenolicus).